A 263-amino-acid polypeptide reads, in one-letter code: MESSNQPNVLIFDSGVGGLSVFQEINKRLPEVNYYYLFDNQAYPYGELSQETLLARVEALVVKMTQQFAIDLVVIACNTASTIVLPTLRAKLPIPVVGVVPAIKPASLLANRAVGLIATPATVTRQYTHDLIRDFAHEKEVELLGSTRLVDIAEEKLRGRQVDQQELAMILKPMKHKVDVAVLGCTHFPLLKEEIQQVLGDEIILVDSGEAIARRVQSLLHQLSPQSTKTPWRIFSTAQPWDEAALNGSLKTMGFNAIELYPL.

Residues 13–14 (DS) and 45–46 (YG) contribute to the substrate site. Catalysis depends on cysteine 77, which acts as the Proton donor/acceptor. 78–79 (NT) is a binding site for substrate. Cysteine 185 (proton donor/acceptor) is an active-site residue. 186–187 (TH) contributes to the substrate binding site.

Belongs to the aspartate/glutamate racemases family.

It carries out the reaction L-glutamate = D-glutamate. It participates in cell wall biogenesis; peptidoglycan biosynthesis. Its function is as follows. Provides the (R)-glutamate required for cell wall biosynthesis. The sequence is that of Glutamate racemase from Vibrio vulnificus (strain CMCP6).